The following is a 571-amino-acid chain: Double-stranded RNA-binding protein Staufen homolog 2 (571 aa).

The DRBM 1 domain maps to 8-75 (TPMCLVNELA…ANKALTESTL (68 aa)). Phosphoserine is present on residues Pro-9 and Val-13. Arg-18 bears the Phosphothreonine mark. Position 21 is a phosphoserine (Ser-21). Disordered regions lie at residues 71 to 94 (TEST…PGSI) and 178 to 203 (ALQN…DDKD). The span at 83–94 (PKSNVNNNPGSI) shows a compositional bias: polar residues. Residues 95–181 (TPTVELNGLA…AMKALQALQN (87 aa)) form the DRBM 2 domain. Ser-188 bears the Phosphoserine mark. Over residues 194 to 203 (SGKEMDDDKD) the composition is skewed to basic and acidic residues. DRBM domains lie at 207–274 (SEIS…ELKK) and 307–375 (NPIS…QLGY). 2 consecutive short sequence motifs (nuclear localization signal) follow at residues 273–317 (KKLP…QIQQ) and 373–412 (LGYK…PKGI). The required for dendritic transport stretch occupies residues 381 to 571 (LQDQLDKTGE…QDCKKSKSVI (191 aa)). Residues 382-413 (QDQLDKTGENKGWSGPKPGFPEPANNTPKGIL) are disordered. 6 positions are modified to phosphoserine: Ser-395, Ser-416, Ser-426, Ser-440, Ser-456, and Ser-493. Residues 546-571 (LREKADNNQANPGSITQDCKKSKSVI) form a disordered region. A compositionally biased stretch (polar residues) spans 552 to 562 (NNQANPGSITQ).

Identified in a mRNP complex, at least composed of DHX9, DDX3X, ELAVL1, HNRNPU, IGF2BP1, ILF3, PABPC1, PCBP2, PTBP2, STAU1, STAU2, SYNCRIP and YBX1. Interacts with the exportin XPO5. This requires RNA and RAN bound to GTP. Interacts with microtubules. Isoform 2 and isoform 3 may also interact with ribosomes, and this association is independent of translation. Interacts with TRIM71 (via NHL repeats) in an RNA-dependent manner. As to expression, expressed in both somata and dendrites of hippocampal neurons.

It localises to the nucleus. Its subcellular location is the nucleolus. The protein resides in the cytoplasm. The protein localises to the endoplasmic reticulum. In terms of biological role, RNA-binding protein required for the microtubule-dependent transport of neuronal RNA from the cell body to the dendrite. As protein synthesis occurs within the dendrite, the localization of specific mRNAs to dendrites may be a prerequisite for neurite outgrowth and plasticity at sites distant from the cell body. This is Double-stranded RNA-binding protein Staufen homolog 2 (Stau2) from Rattus norvegicus (Rat).